A 1376-amino-acid polypeptide reads, in one-letter code: YLP motif-containing protein 1 (1376 aa).

Disordered regions lie at residues methionine 1–aspartate 335 and serine 511–arginine 1058. Over residues tyrosine 14–alanine 27 the composition is skewed to pro residues. Low complexity-rich tracts occupy residues alanine 31–glycine 50 and leucine 59–histidine 80. 5 stretches are compositionally biased toward pro residues: residues histidine 81–methionine 93, glutamine 102–proline 114, proline 148–tyrosine 158, methionine 166–tyrosine 176, and tyrosine 184–isoleucine 204. Polar residues-rich tracts occupy residues glycine 207 to proline 216 and serine 238 to arginine 260. Positions threonine 261–glycine 271 are enriched in basic residues. Residues aspartate 277 to alanine 286 show a composition bias toward basic and acidic residues. Pro residues-rich tracts occupy residues proline 303 to glutamate 320, serine 511 to proline 537, leucine 545 to methionine 594, and proline 632 to glutamine 641. The span at serine 642–valine 671 shows a compositional bias: polar residues. An N6-methyllysine modification is found at lysine 675. Basic and acidic residues predominate over residues arginine 698–glycine 714. 3 stretches are compositionally biased toward pro residues: residues methionine 738 to lysine 753, threonine 773 to isoleucine 796, and proline 840 to valine 870. Lysine 886 participates in a covalent cross-link: Glycyl lysine isopeptide (Lys-Gly) (interchain with G-Cter in SUMO2). 4 stretches are compositionally biased toward basic and acidic residues: residues isoleucine 896 to phenylalanine 930, threonine 937 to proline 1004, glycine 1013 to methionine 1023, and arginine 1039 to arginine 1058. Residue lysine 943 forms a Glycyl lysine isopeptide (Lys-Gly) (interchain with G-Cter in SUMO2) linkage. Residues lysine 1326–aspartate 1333 form an involved in interaction with PPP1CA region.

As to quaternary structure, interacts with PPP1CA and NCOA5. Forms a complex with ILF2, ILF3, KHDRBS1, RBMX, NCOA5 and PPP1CA. As to expression, high level expression seen in the brain, adipose tissue, heart and kidney, with a low level expression in muscle, spleen and lung (at protein level).

It localises to the nucleus. The protein localises to the nucleus speckle. Plays a role in the reduction of telomerase activity during differentiation of embryonic stem cells by binding to the core promoter of TERT and controlling its down-regulation. This is YLP motif-containing protein 1 (Ylpm1) from Rattus norvegicus (Rat).